We begin with the raw amino-acid sequence, 110 residues long: Small ribosomal subunit protein bS16 (110 aa).

Basic and acidic residues predominate over residues 81-104; the sequence is VRPAEVLGKQKQEKERSAKKKDAT. The interval 81–110 is disordered; it reads VRPAEVLGKQKQEKERSAKKKDATASETSE.

The protein belongs to the bacterial ribosomal protein bS16 family.

This chain is Small ribosomal subunit protein bS16, found in Prochlorococcus marinus (strain NATL1A).